A 173-amino-acid chain; its full sequence is Nicotinamide-nucleotide adenylyltransferase (173 aa).

Belongs to the archaeal NMN adenylyltransferase family.

The protein resides in the cytoplasm. The catalysed reaction is beta-nicotinamide D-ribonucleotide + ATP + H(+) = diphosphate + NAD(+). It functions in the pathway cofactor biosynthesis; NAD(+) biosynthesis; NAD(+) from nicotinamide D-ribonucleotide: step 1/1. The polypeptide is Nicotinamide-nucleotide adenylyltransferase (Methanosarcina mazei (strain ATCC BAA-159 / DSM 3647 / Goe1 / Go1 / JCM 11833 / OCM 88) (Methanosarcina frisia)).